The primary structure comprises 459 residues: UDP-N-acetylmuramate--L-alanine ligase (459 aa).

113–119 (GSHGKTS) is a binding site for ATP.

Belongs to the MurCDEF family.

Its subcellular location is the cytoplasm. It carries out the reaction UDP-N-acetyl-alpha-D-muramate + L-alanine + ATP = UDP-N-acetyl-alpha-D-muramoyl-L-alanine + ADP + phosphate + H(+). It participates in cell wall biogenesis; peptidoglycan biosynthesis. Its function is as follows. Cell wall formation. The sequence is that of UDP-N-acetylmuramate--L-alanine ligase from Desulfotalea psychrophila (strain LSv54 / DSM 12343).